Here is a 606-residue protein sequence, read N- to C-terminus: UvrABC system protein C (606 aa).

Residues 14 to 93 enclose the GIY-YIG domain; the sequence is QNPGVYLMKD…IKKHSPRYNV (80 aa). The 36-residue stretch at 203–238 folds into the UVR domain; it reads PDLINRLKFEMQTEADLEHFERAAQIRDTILAIQTT.

This sequence belongs to the UvrC family. Interacts with UvrB in an incision complex.

It is found in the cytoplasm. Its function is as follows. The UvrABC repair system catalyzes the recognition and processing of DNA lesions. UvrC both incises the 5' and 3' sides of the lesion. The N-terminal half is responsible for the 3' incision and the C-terminal half is responsible for the 5' incision. This Desulforapulum autotrophicum (strain ATCC 43914 / DSM 3382 / VKM B-1955 / HRM2) (Desulfobacterium autotrophicum) protein is UvrABC system protein C.